Here is a 448-residue protein sequence, read N- to C-terminus: Tubulin beta chain (448 aa).

Q11, E69, S138, G142, T143, G144, N204, and N226 together coordinate GTP. E69 serves as a coordination point for Mg(2+). The tract at residues 425–448 (YQDAGVDEEEEEYDEEAPVEEPLE) is disordered. The span at 429–448 (GVDEEEEEYDEEAPVEEPLE) shows a compositional bias: acidic residues.

This sequence belongs to the tubulin family. As to quaternary structure, dimer of alpha and beta chains. A typical microtubule is a hollow water-filled tube with an outer diameter of 25 nm and an inner diameter of 15 nM. Alpha-beta heterodimers associate head-to-tail to form protofilaments running lengthwise along the microtubule wall with the beta-tubulin subunit facing the microtubule plus end conferring a structural polarity. Microtubules usually have 13 protofilaments but different protofilament numbers can be found in some organisms and specialized cells. Mg(2+) is required as a cofactor.

The protein resides in the cytoplasm. It localises to the cytoskeleton. Functionally, tubulin is the major constituent of microtubules, a cylinder consisting of laterally associated linear protofilaments composed of alpha- and beta-tubulin heterodimers. Microtubules grow by the addition of GTP-tubulin dimers to the microtubule end, where a stabilizing cap forms. Below the cap, tubulin dimers are in GDP-bound state, owing to GTPase activity of alpha-tubulin. This Metarhizium anisopliae (Entomophthora anisopliae) protein is Tubulin beta chain.